We begin with the raw amino-acid sequence, 386 residues long: Queuine tRNA-ribosyltransferase (386 aa).

Aspartate 99 (proton acceptor) is an active-site residue. Substrate-binding positions include 99–103, aspartate 153, glutamine 198, and glycine 225; that span reads DSGGF. The RNA binding stretch occupies residues 256 to 262; the sequence is GVGKPED. Aspartate 275 serves as the catalytic Nucleophile. The segment at 280-284 is RNA binding; important for wobble base 34 recognition; it reads TRNAR. The Zn(2+) site is built by cysteine 313, cysteine 315, cysteine 318, and histidine 344.

The protein belongs to the queuine tRNA-ribosyltransferase family. Homodimer. Within each dimer, one monomer is responsible for RNA recognition and catalysis, while the other monomer binds to the replacement base PreQ1. Zn(2+) serves as cofactor.

It carries out the reaction 7-aminomethyl-7-carbaguanine + guanosine(34) in tRNA = 7-aminomethyl-7-carbaguanosine(34) in tRNA + guanine. The protein operates within tRNA modification; tRNA-queuosine biosynthesis. Functionally, catalyzes the base-exchange of a guanine (G) residue with the queuine precursor 7-aminomethyl-7-deazaguanine (PreQ1) at position 34 (anticodon wobble position) in tRNAs with GU(N) anticodons (tRNA-Asp, -Asn, -His and -Tyr). Catalysis occurs through a double-displacement mechanism. The nucleophile active site attacks the C1' of nucleotide 34 to detach the guanine base from the RNA, forming a covalent enzyme-RNA intermediate. The proton acceptor active site deprotonates the incoming PreQ1, allowing a nucleophilic attack on the C1' of the ribose to form the product. After dissociation, two additional enzymatic reactions on the tRNA convert PreQ1 to queuine (Q), resulting in the hypermodified nucleoside queuosine (7-(((4,5-cis-dihydroxy-2-cyclopenten-1-yl)amino)methyl)-7-deazaguanosine). The sequence is that of Queuine tRNA-ribosyltransferase from Acinetobacter baylyi (strain ATCC 33305 / BD413 / ADP1).